A 232-amino-acid polypeptide reads, in one-letter code: 2-C-methyl-D-erythritol 4-phosphate cytidylyltransferase (232 aa).

It belongs to the IspD/TarI cytidylyltransferase family. IspD subfamily.

It catalyses the reaction 2-C-methyl-D-erythritol 4-phosphate + CTP + H(+) = 4-CDP-2-C-methyl-D-erythritol + diphosphate. The protein operates within isoprenoid biosynthesis; isopentenyl diphosphate biosynthesis via DXP pathway; isopentenyl diphosphate from 1-deoxy-D-xylulose 5-phosphate: step 2/6. In terms of biological role, catalyzes the formation of 4-diphosphocytidyl-2-C-methyl-D-erythritol from CTP and 2-C-methyl-D-erythritol 4-phosphate (MEP). In Deinococcus radiodurans (strain ATCC 13939 / DSM 20539 / JCM 16871 / CCUG 27074 / LMG 4051 / NBRC 15346 / NCIMB 9279 / VKM B-1422 / R1), this protein is 2-C-methyl-D-erythritol 4-phosphate cytidylyltransferase.